The primary structure comprises 291 residues: F-box protein PP2-A12 (291 aa).

Positions 25–71 (KPGLGDLPEACVAIIVENLDPVEICRFSKLNRAFRGASWADCVWESK) constitute an F-box domain.

The protein is F-box protein PP2-A12 (P2A12) of Arabidopsis thaliana (Mouse-ear cress).